Here is a 630-residue protein sequence, read N- to C-terminus: Adagio-like protein 3 (630 aa).

The PAS domain occupies 54 to 126 (EDEAAAWEGR…PLVDPMVVSE (73 aa)). At cysteine 102 the chain carries S-4a-FMN cysteine. Residues 220-268 (YCCILQLSDEVLAHNILSRLSPRDVASIGSVCTRMHELTKNDHLRKMVC) enclose the F-box domain. Kelch repeat units follow at residues 380–430 (SWLV…CTLD), 432–483 (SKLV…SVFG), 485–537 (TKLF…RLDH), 545–597 (GRII…CVVG), and 599–629 (TRVL…PDED).

It belongs to the ADAGIO family. Post-translationally, FMN binds covalently to cysteine after exposure to blue light and is reversed in the dark.

The protein resides in the nucleus. It participates in protein modification; protein ubiquitination. Component of an E3 ubiquitin ligase complex that plays a central role in blue light-dependent circadian cycles. Acts as a blue light photoreceptor, due to the presence of FMN, that mediates light-regulated protein degradation of critical clock components by targeting them to the proteasome complex. The SCF(ADO3) E3 ubiquitin ligase complex is involved in the regulation of circadian clock-dependent processes including transition to flowering time, hypocotyl elongation, cotyledons and leaf movement rhythms. This is Adagio-like protein 3 from Oryza sativa subsp. japonica (Rice).